Reading from the N-terminus, the 709-residue chain is Leucine-rich repeat-containing protein 4B (709 aa).

The N-terminal stretch at 1-38 is a signal peptide; that stretch reads MAQAHIRGSPCPLLPPGRMSWPHGALLLLWLFSPPLRA. Residues 50–88 enclose the LRRNT domain; it reads GGGSPPATSCPAACSCSNQASRVICTRRELAEVPASIPV. LRR repeat units follow at residues 89–110, 113–134, 137–158, 161–182, 185–207, 210–231, 232–253, 256–277, and 280–301; these read NTRY…TFKH, HLEI…AFNG, SLNT…AFEY, KLRE…AFNR, SLRR…AFEG, NLRY…TALV, RLEE…SFQG, SLRK…AFDD, and SLEE…LFTP. Residue Asn-226 is glycosylated (N-linked (GlcNAc...) asparagine). Asn-285, Asn-335, Asn-376, Asn-402, Asn-424, Asn-427, Asn-446, and Asn-454 each carry an N-linked (GlcNAc...) asparagine glycan. The region spanning 313 to 365 is the LRRCT domain; it reads NPWHCNCDVLWLSWWLKETVPSNTTCCARCHAPAGLKGRYIGELDQSHFTCYA. An Ig-like C2-type domain is found at 366-454; the sequence is PVIVEPPTDL…GNTTASATLN (89 aa). Cysteines 387 and 438 form a disulfide. A disordered region spans residues 496–552; that stretch reads TQPGEEAQQPRGTEKEPPGPTTDGAWGGGRPDAAAPASASTTAPAPRSSRPTEKAFT. Positions 528–544 are enriched in low complexity; sequence AAAPASASTTAPAPRSS. The helical transmembrane segment at 575–595 threads the bilayer; that stretch reads IIIGCFVAITFMAAVMLVAFY. At Ser-689 the chain carries Phosphoserine.

In terms of assembly, interacts with PTPRF. Interacts with DLG4. Post-translationally, N-glycosylated. O-glycosylated; contains sialic acid.

It is found in the membrane. Its subcellular location is the presynaptic cell membrane. Its function is as follows. Synaptic adhesion protein. Regulates the formation of excitatory synapses. The trans-synaptic adhesion between LRRC4B and PTPRF regulates the formation of excitatory synapses in a bidirectional manner. This Mus musculus (Mouse) protein is Leucine-rich repeat-containing protein 4B (Lrrc4b).